A 280-amino-acid chain; its full sequence is tRNA pseudouridine synthase A (280 aa).

D55 functions as the Nucleophile in the catalytic mechanism. Y110 contacts substrate.

The protein belongs to the tRNA pseudouridine synthase TruA family.

The catalysed reaction is uridine(38/39/40) in tRNA = pseudouridine(38/39/40) in tRNA. Functionally, formation of pseudouridine at positions 38, 39 and 40 in the anticodon stem and loop of transfer RNAs. In Methanosphaerula palustris (strain ATCC BAA-1556 / DSM 19958 / E1-9c), this protein is tRNA pseudouridine synthase A.